A 729-amino-acid polypeptide reads, in one-letter code: Polyribonucleotide nucleotidyltransferase (729 aa).

The interval 399-419 is disordered; it reads YMHNYNFPPYSTGETGRVGSP. Positions 509 and 515 each coordinate Mg(2+). The 60-residue stretch at 575–634 folds into the KH domain; it reads PRVISVKIPVDKIGEVIGPKGKMINQIQADSGAEITVEDDGTIYIGAADGPAAETARSAI. Residues 646-718 enclose the S1 motif domain; that stretch reads GERYLGTIVK…ARGKISLAPG (73 aa).

This sequence belongs to the polyribonucleotide nucleotidyltransferase family. Requires Mg(2+) as cofactor.

It localises to the cytoplasm. The catalysed reaction is RNA(n+1) + phosphate = RNA(n) + a ribonucleoside 5'-diphosphate. Involved in mRNA degradation. Catalyzes the phosphorolysis of single-stranded polyribonucleotides processively in the 3'- to 5'-direction. The chain is Polyribonucleotide nucleotidyltransferase from Parafrankia sp. (strain EAN1pec).